A 1366-amino-acid polypeptide reads, in one-letter code: ABC multidrug transporter MDR2 (1366 aa).

Residues 52-72 (IALIVIGTIAGIGAGIPFPLL) form a helical membrane-spanning segment. Positions 56 to 354 (VIGTIAGIGA…MAPFMHIFAS (299 aa)) constitute an ABC transmembrane type-1 1 domain. N-linked (GlcNAc...) asparagine glycosylation is present at Asn84. 5 helical membrane-spanning segments follow: residues 106-126 (VLQV…HTGC), 180-200 (KVGL…VAFL), 202-222 (VATI…MAFG), 288-308 (IQFG…FWQG), and 323-343 (VSVG…FVLS). Positions 390–669 (IELQDVTFNY…DGVYAGMVRL (280 aa)) constitute an ABC transporter 1 domain. 425 to 432 (GTSGSGKS) is an ATP binding site. Asn620 carries N-linked (GlcNAc...) asparagine glycosylation. The tract at residues 727 to 746 (PEEADSLPTEPEAKKEKPKQ) is disordered. A run of 4 helical transmembrane segments spans residues 768-788 (LGLI…VIFG), 807-827 (GMLF…AVIV), 868-888 (LLVA…GTTI), and 898-918 (LFAG…VLLA). Residues 768-1055 (LGLITSIMIG…MFALVPDISK (288 aa)) form the ABC transmembrane type-1 2 domain. Asn976 is a glycosylation site (N-linked (GlcNAc...) asparagine). A run of 2 helical transmembrane segments spans residues 995–1015 (FWLS…YWWG) and 1019–1039 (ILAG…LLFS). Residues 1122 to 1361 (VQFRNVHFRY…CESYRANVIH (240 aa)) enclose the ABC transporter 2 domain. 1157–1164 (GPSGSGKS) lines the ATP pocket.

The protein belongs to the ABC transporter superfamily. ABCB family. Multidrug resistance exporter (TC 3.A.1.201) subfamily.

The protein localises to the cell membrane. Its function is as follows. Pleiotropic ABC efflux transporter that may be involved in the modulation susceptibility to a wide range of unrelated cytotoxic compounds. Does not act as an efflux pump for azoles, including fluconazole, itraconazole, ketoconazole, miconazole and voriconazole, nor does it modulate susceptibility to cycloheximide. The polypeptide is ABC multidrug transporter MDR2 (Trichophyton rubrum (strain ATCC MYA-4607 / CBS 118892) (Athlete's foot fungus)).